Reading from the N-terminus, the 133-residue chain is uncharacterized protein (133 aa).

The recombinase DNA-binding region spans 1 to 82 (MIDKIKKGYS…QKMLHDRQNF (82 aa)).

This is an uncharacterized protein from Bacillus phage phi105 (Bacteriophage phi-105).